The chain runs to 263 residues: 3-methyl-2-oxobutanoate hydroxymethyltransferase (263 aa).

Positions 45 and 84 each coordinate Mg(2+). 3-methyl-2-oxobutanoate-binding positions include 45–46 (DS), Asp-84, and Lys-112. Glu-114 contacts Mg(2+). Catalysis depends on Glu-181, which acts as the Proton acceptor.

It belongs to the PanB family. As to quaternary structure, homodecamer; pentamer of dimers. Requires Mg(2+) as cofactor.

The protein resides in the cytoplasm. The catalysed reaction is 3-methyl-2-oxobutanoate + (6R)-5,10-methylene-5,6,7,8-tetrahydrofolate + H2O = 2-dehydropantoate + (6S)-5,6,7,8-tetrahydrofolate. The protein operates within cofactor biosynthesis; (R)-pantothenate biosynthesis; (R)-pantoate from 3-methyl-2-oxobutanoate: step 1/2. In terms of biological role, catalyzes the reversible reaction in which hydroxymethyl group from 5,10-methylenetetrahydrofolate is transferred onto alpha-ketoisovalerate to form ketopantoate. This chain is 3-methyl-2-oxobutanoate hydroxymethyltransferase, found in Buchnera aphidicola subsp. Acyrthosiphon pisum (strain APS) (Acyrthosiphon pisum symbiotic bacterium).